We begin with the raw amino-acid sequence, 298 residues long: Cyanophycinase (298 aa).

Active-site charge relay system residues include serine 155, glutamate 173, and histidine 197.

The protein belongs to the peptidase S51 family.

The enzyme catalyses [L-4-(L-arginin-2-N-yl)aspartate](n) + H2O = [L-4-(L-arginin-2-N-yl)aspartate](n-1) + L-4-(L-arginin-2-N-yl)aspartate. Functionally, exopeptidase that catalyzes the hydrolytic cleavage of multi-L-arginyl-poly-L-aspartic acid (cyanophycin; a water-insoluble reserve polymer) into aspartate-arginine dipeptides. This chain is Cyanophycinase (cphB), found in Nostoc sp. (strain PCC 7120 / SAG 25.82 / UTEX 2576).